A 550-amino-acid chain; its full sequence is Hydroxylamine reductase (550 aa).

The [2Fe-2S] cluster site is built by C4, C7, C19, and C26. Positions 249, 273, 317, 405, 433, 458, 492, and 494 each coordinate hybrid [4Fe-2O-2S] cluster. Residue C405 is modified to Cysteine persulfide.

Belongs to the HCP family. Requires [2Fe-2S] cluster as cofactor. Hybrid [4Fe-2O-2S] cluster is required as a cofactor.

The protein resides in the cytoplasm. The catalysed reaction is A + NH4(+) + H2O = hydroxylamine + AH2 + H(+). Its function is as follows. Catalyzes the reduction of hydroxylamine to form NH(3) and H(2)O. The polypeptide is Hydroxylamine reductase (Aeromonas salmonicida (strain A449)).